The primary structure comprises 252 residues: Large ribosomal subunit protein uL4 (252 aa).

This sequence belongs to the universal ribosomal protein uL4 family. In terms of assembly, part of the 50S ribosomal subunit.

Its function is as follows. One of the primary rRNA binding proteins, this protein initially binds near the 5'-end of the 23S rRNA. It is important during the early stages of 50S assembly. It makes multiple contacts with different domains of the 23S rRNA in the assembled 50S subunit and ribosome. Functionally, forms part of the polypeptide exit tunnel. The sequence is that of Large ribosomal subunit protein uL4 from Methanococcus maripaludis (strain DSM 14266 / JCM 13030 / NBRC 101832 / S2 / LL).